Here is a 548-residue protein sequence, read N- to C-terminus: Chaperonin GroEL 3 (548 aa).

ATP is bound by residues 30–33 (TLGP), Lys-51, 87–91 (DGTTT), Gly-415, and Asp-496.

This sequence belongs to the chaperonin (HSP60) family. In terms of assembly, forms a cylinder of 14 subunits composed of two heptameric rings stacked back-to-back. Interacts with the co-chaperonin GroES.

It localises to the cytoplasm. It carries out the reaction ATP + H2O + a folded polypeptide = ADP + phosphate + an unfolded polypeptide.. Its function is as follows. Together with its co-chaperonin GroES, plays an essential role in assisting protein folding. The GroEL-GroES system forms a nano-cage that allows encapsulation of the non-native substrate proteins and provides a physical environment optimized to promote and accelerate protein folding. The protein is Chaperonin GroEL 3 of Nitrobacter winogradskyi (strain ATCC 25391 / DSM 10237 / CIP 104748 / NCIMB 11846 / Nb-255).